The following is a 95-amino-acid chain: Putative defensin-like protein 262 (95 aa).

Residues 1–26 (MEKTSLKLIFLFSLTVIAFCSSLGDA) form the signal peptide. 4 disulfides stabilise this stretch: Cys48–Cys95, Cys64–Cys83, Cys70–Cys91, and Cys74–Cys93.

This sequence belongs to the DEFL family.

Its subcellular location is the secreted. This chain is Putative defensin-like protein 262, found in Arabidopsis thaliana (Mouse-ear cress).